Here is a 377-residue protein sequence, read N- to C-terminus: Spermidine/putrescine import ATP-binding protein PotA (377 aa).

One can recognise an ABC transporter domain in the interval 18–248 (IRLSGISKSF…PKNLFVARFI (231 aa)). ATP is bound at residue 50–57 (GPSGCGKT).

Belongs to the ABC transporter superfamily. Spermidine/putrescine importer (TC 3.A.1.11.1) family. The complex is composed of two ATP-binding proteins (PotA), two transmembrane proteins (PotB and PotC) and a solute-binding protein (PotD).

It is found in the cell inner membrane. The enzyme catalyses ATP + H2O + polyamine-[polyamine-binding protein]Side 1 = ADP + phosphate + polyamineSide 2 + [polyamine-binding protein]Side 1.. In terms of biological role, part of the ABC transporter complex PotABCD involved in spermidine/putrescine import. Responsible for energy coupling to the transport system. In Vibrio parahaemolyticus serotype O3:K6 (strain RIMD 2210633), this protein is Spermidine/putrescine import ATP-binding protein PotA.